A 425-amino-acid chain; its full sequence is Monoacylglycerol lipase ABHD2 (425 aa).

Residues 1-9 (MNAMLETPE) are Cytoplasmic-facing. A helical; Signal-anchor for type II membrane protein membrane pass occupies residues 10–30 (LPAVFDGVKLAAVAAVLYVIV). At 31-425 (RCLNLKSPTA…DTEQVEADLE (395 aa)) the chain is on the extracellular side. Residues 128–382 (MVICPGIANH…HGGHLGFFEG (255 aa)) enclose the AB hydrolase-1 domain. An N-linked (GlcNAc...) asparagine glycan is attached at Asn-136. Ser-207 acts as the Nucleophile in catalysis. Active-site charge relay system residues include Asp-345 and His-376.

The protein belongs to the AB hydrolase superfamily. AB hydrolase 4 family. In terms of tissue distribution, present in sperm (at protein level).

It is found in the cell projection. Its subcellular location is the cilium. The protein resides in the flagellum membrane. It localises to the cell membrane. It carries out the reaction an acetyl ester + H2O = an aliphatic alcohol + acetate + H(+). It catalyses the reaction Hydrolyzes glycerol monoesters of long-chain fatty acids.. The enzyme catalyses a triacylglycerol + H2O = a diacylglycerol + a fatty acid + H(+). The catalysed reaction is 2-(5Z,8Z,11Z,14Z-eicosatetraenoyl)-glycerol + H2O = glycerol + (5Z,8Z,11Z,14Z)-eicosatetraenoate + H(+). It carries out the reaction a butanoate ester + H2O = an aliphatic alcohol + butanoate + H(+). It catalyses the reaction hexadecanoate ester + H2O = an aliphatic alcohol + hexadecanoate + H(+). Acylglycerol lipase activity is activated upon binding to progesterone. Its function is as follows. Progesterone-dependent acylglycerol lipase that catalyzes hydrolysis of endocannabinoid arachidonoylglycerol (AG) from cell membrane. Acts as a progesterone receptor: progesterone-binding activates the acylglycerol lipase activity, mediating degradation of 1-arachidonoylglycerol (1AG) and 2-arachidonoylglycerol (2AG) to glycerol and arachidonic acid (AA). Also displays an ester hydrolase activity against acetyl ester, butanoate ester and hexadecanoate ester. Plays a key role in sperm capacitation in response to progesterone by mediating degradation of 2AG, an inhibitor of the sperm calcium channel CatSper, leading to calcium influx via CatSper and sperm activation. May also play a role in smooth muscle cells migration. The sequence is that of Monoacylglycerol lipase ABHD2 from Homo sapiens (Human).